Reading from the N-terminus, the 635-residue chain is Biosynthetic arginine decarboxylase (635 aa).

At Lys100 the chain carries N6-(pyridoxal phosphate)lysine. Substrate is bound at residue 282–292; sequence LDIGGGLGVDY.

Belongs to the Orn/Lys/Arg decarboxylase class-II family. SpeA subfamily. Requires Mg(2+) as cofactor. Pyridoxal 5'-phosphate serves as cofactor.

It catalyses the reaction L-arginine + H(+) = agmatine + CO2. It functions in the pathway amine and polyamine biosynthesis; agmatine biosynthesis; agmatine from L-arginine: step 1/1. Catalyzes the biosynthesis of agmatine from arginine. The protein is Biosynthetic arginine decarboxylase of Geotalea uraniireducens (strain Rf4) (Geobacter uraniireducens).